A 379-amino-acid chain; its full sequence is Cytochrome b (379 aa).

4 helical membrane passes run 34-54 (YGSL…MLAM), 78-100 (WMIR…VHIG), 113-133 (TWNI…LGYV), and 179-199 (FFSL…IHLL). His84 and His98 together coordinate heme b. Positions 183 and 197 each coordinate heme b. His202 is an a ubiquinone binding site. The next 4 helical transmembrane spans lie at 225–245 (FSIK…FLVL), 289–309 (LGGV…PIFS), 320–340 (WSGM…WIGA), and 345–365 (APYI…FFWM).

The protein belongs to the cytochrome b family. The main subunits of complex b-c1 are: cytochrome b, cytochrome c1 and the Rieske protein. The cofactor is heme b.

It localises to the mitochondrion inner membrane. Component of the ubiquinol-cytochrome c reductase complex (complex III or cytochrome b-c1 complex) that is part of the mitochondrial respiratory chain. The b-c1 complex mediates electron transfer from ubiquinol to cytochrome c. Contributes to the generation of a proton gradient across the mitochondrial membrane that is then used for ATP synthesis. In Epiperipatus biolleyi (Velvet worm), this protein is Cytochrome b (mt:Cyt-b).